The primary structure comprises 424 residues: UDP-N-acetylglucosamine 1-carboxyvinyltransferase (424 aa).

22 to 23 (KN) is a binding site for phosphoenolpyruvate. Arg-93 lines the UDP-N-acetyl-alpha-D-glucosamine pocket. Cys-117 functions as the Proton donor in the catalytic mechanism. Position 117 is a 2-(S-cysteinyl)pyruvic acid O-phosphothioketal (Cys-117). UDP-N-acetyl-alpha-D-glucosamine contacts are provided by residues 122–126 (RPIDL), Asp-307, and Ile-329.

It belongs to the EPSP synthase family. MurA subfamily.

It localises to the cytoplasm. It carries out the reaction phosphoenolpyruvate + UDP-N-acetyl-alpha-D-glucosamine = UDP-N-acetyl-3-O-(1-carboxyvinyl)-alpha-D-glucosamine + phosphate. Its pathway is cell wall biogenesis; peptidoglycan biosynthesis. Its function is as follows. Cell wall formation. Adds enolpyruvyl to UDP-N-acetylglucosamine. In Chlorobium phaeovibrioides (strain DSM 265 / 1930) (Prosthecochloris vibrioformis (strain DSM 265)), this protein is UDP-N-acetylglucosamine 1-carboxyvinyltransferase.